The chain runs to 296 residues: CCAAT/enhancer-binding protein beta (296 aa).

A required for Lys-133 sumoylation region spans residues 1-22; sequence MHRLLAWDAACLPPPPAAFRPM. Arginine 3 carries the post-translational modification Asymmetric dimethylarginine; by CARM1. Residues 22–104 form a required for MYC transcriptional repression region; sequence MEVANFYYEP…YGAKPSKKPA (83 aa). An N6-acetyllysine; alternate modification is found at lysine 39. N6-methylated lysine; alternate is present on lysine 39. N6-acetyllysine; by KAT2A and KAT2B occurs at positions 98 and 101. Lysine 102 bears the N6-acetyllysine; by KAT2A and KAT2B; alternate mark. Glycyl lysine isopeptide (Lys-Gly) (interchain with G-Cter in SUMO2); alternate cross-links involve residues lysine 102 and lysine 133. Lysine 133 participates in a covalent cross-link: Glycyl lysine isopeptide (Lys-Gly) (interchain with G-Cter in SUMO); alternate. Lysine 144 is covalently cross-linked (Glycyl lysine isopeptide (Lys-Gly) (interchain with G-Cter in SUMO2)). A disordered region spans residues 171–199; sequence SGSSGSLSTSSSSSPPGTPSPADAKAAPA. At threonine 179 the chain carries Phosphothreonine; by GSK3-beta. O-linked (GlcNAc) serine glycosylation is found at serine 180 and serine 181. Serine 184 is subject to Phosphoserine; by GSK3-beta. Position 188 is a phosphothreonine; by RPS6KA1, CDK2 and MAPK (threonine 188). Glycyl lysine isopeptide (Lys-Gly) (interchain with G-Cter in SUMO2) cross-links involve residues lysine 211 and lysine 213. Threonine 217 carries the phosphothreonine; by RPS6KA1 and PKC/PRKCA modification. Residues 222 to 285 form the bZIP domain; the sequence is SDEYKMRRER…STLRNLFKQL (64 aa). A basic motif region spans residues 226–246; it reads KMRRERNNIAVRKSRDKAKMR. Residue serine 239 is modified to Phosphoserine; by PKC/PRKCA. A leucine-zipper region spans residues 248 to 255; it reads LETQHKVL. Serine 276 carries the phosphoserine; by CaMK2 modification. Residue lysine 283 forms a Glycyl lysine isopeptide (Lys-Gly) (interchain with G-Cter in SUMO2) linkage.

The protein belongs to the bZIP family. C/EBP subfamily. Binds DNA as a homodimer and as a heterodimer. Interacts with ATF4. Binds DNA as a heterodimer with ATF4. Interacts with MYB; within the complex, MYB and CEBPB bind to different promoter regions. Can form stable heterodimers with CEBPA, CEBPD and CEBPE. Interacts with SIX1. Isoform 2 and isoform 3 also form heterodimers. Interacts with TRIM28 and PTGES2. Interacts with PRDM16. Interacts with CCDC85B. Forms a complex with THOC5. Interacts with ZNF638; this interaction increases transcriptional activation. Interacts with CIDEA and CIDEC. Interaction with CIDEA increases transcriptional activation of a subset of CEBPB downstream target genes, including ID2, IGF1, PRLR, SOCS1, SOCS3, XDH. Interaction with CIDEC increases transcriptional activation of SOCS1, SOCS3, TGFB1, TGFBR1, ID2 and XDH. Interacts with DDIT3/CHOP. Interacts with EP300; recruits EP300 to chromatin. Interacts with RORA; the interaction disrupts interaction with EP300. Interacts (not methylated) with MED23, MED26, SMARCA2, SMARCB1 and SMARCC1. Interacts with KAT2A and KAT2B. Interacts with ATF5; EP300 is required for ATF5 and CEBPB interaction and DNA binding. Interacts with NFE2L1; the heterodimer represses expression of DSPP during odontoblast differentiation. Post-translationally, sumoylated by polymeric chains of SUMO2 or SUMO3. Sumoylation at Lys-133 is required for inhibition of T-cells proliferation. In adipocytes, sumoylation at Lys-133 by PIAS1 leads to ubiquitination and subsequent proteasomal degradation. Desumoylated by SENP2, which abolishes ubiquitination and stabilizes protein levels. In terms of processing, ubiquitinated, leading to proteasomal degradation. Phosphorylated at Thr-188 by MAPK and CDK2, serves to prime phosphorylation at Thr-179 and Ser-184 by GSK3B and acquire DNA-binding as well as transactivation activities, required to induce adipogenesis. MAPK and CDK2 act sequentially to maintain Thr-188 in the primed phosphorylated state during mitotical cloning expansion and thereby progression of terminal differentiation. Phosphorylation at Thr-217 enhances transactivation activity. Phosphorylation at Ser-276 in response to calcium increases transactivation activity. Phosphorylated at Thr-188 by RPS6KA1. Post-translationally, O-glycosylated, glycosylation at Ser-180 and Ser-181 prevents phosphorylation on Thr-188, Ser-184 and Thr-179 and DNA binding activity which delays the adipocyte differentiation program. In terms of processing, acetylated. Acetylation at Lys-39 is an important and dynamic regulatory event that contributes to its ability to transactivate target genes, including those associated with adipogenesis and adipocyte function. Deacetylation by HDAC1 represses its transactivation activity. Acetylated by KAT2A and KAT2B within a cluster of lysine residues between amino acids 98-102, this acetylation is strongly induced by glucocorticoid treatment and enhances transactivation activity. Methylated. Methylation at Arg-3 by CARM1 and at Lys-39 by EHMT2, inhibits transactivation activity. Methylation is probably inhibited by phosphorylation at Thr-188. As to expression, abundantly expressed in myoblasts. Enriched in brown adipose tissue (BAT) versus white adipose tissue (WAT). Expressed in hepatocytes (at protein level). Expressed in T lymphocytes. The expression in granulosa cells of antral follicles is induced by luteinizing hormone. Expressed in chondrocytes and osteoblasts (at protein level).

Its subcellular location is the nucleus. It localises to the cytoplasm. In terms of biological role, important transcription factor regulating the expression of genes involved in immune and inflammatory responses. Also plays a significant role in adipogenesis, as well as in the gluconeogenic pathway, liver regeneration, and hematopoiesis. The consensus recognition site is 5'-T[TG]NNGNAA[TG]-3'. Its functional capacity is governed by protein interactions and post-translational protein modifications. During early embryogenesis, plays essential and redundant roles with CEBPA. Has a promitotic effect on many cell types such as hepatocytes and adipocytes but has an antiproliferative effect on T-cells by repressing MYC expression, facilitating differentiation along the T-helper 2 lineage. Binds to regulatory regions of several acute-phase and cytokines genes and plays a role in the regulation of acute-phase reaction and inflammation. Also plays a role in intracellular bacteria killing. During adipogenesis, is rapidly expressed and, after activation by phosphorylation, induces CEBPA and PPARG, which turn on the series of adipocyte genes that give rise to the adipocyte phenotype. The delayed transactivation of the CEBPA and PPARG genes by CEBPB appears necessary to allow mitotic clonal expansion and thereby progression of terminal differentiation. Essential for female reproduction because of a critical role in ovarian follicle development. Restricts osteoclastogenesis. Together with NFE2L1; represses expression of DSPP during odontoblast differentiation. Its function is as follows. Essential for gene expression induction in activated macrophages. Plays a major role in immune responses such as CD4(+) T-cell response, granuloma formation and endotoxin shock. Not essential for intracellular bacteria killing. Acts as a dominant negative through heterodimerization with isoform 2. Promotes osteoblast differentiation and osteoclastogenesis. The protein is CCAAT/enhancer-binding protein beta of Mus musculus (Mouse).